A 684-amino-acid chain; its full sequence is Kinesin-like protein KIN-13B (684 aa).

2 disordered regions span residues 1 to 31 (MSGRQRSVAAAVHHQRQLSDNPLDMSSSNGR) and 71 to 103 (GNEFFGEPTTPQYGARPTNQRKNNDESEFSPGL). Polar residues-rich tracts occupy residues 18 to 31 (LSDNPLDMSSSNGR) and 79 to 91 (TTPQYGARPTNQR). Residues 169–492 (KIKVVVRKRP…LRYADRVKSL (324 aa)) form the Kinesin motor domain. An ATP-binding site is contributed by 258–265 (GQTGSGKT). The segment at 574-594 (KPTIQMKSRDMPRPDMKKSNS) is disordered. The span at 580–594 (KSRDMPRPDMKKSNS) shows a compositional bias: basic and acidic residues. The stretch at 596–626 (DNLNALLQEEEDLVNAHRKQVEDTMNIVKEE) forms a coiled coil.

The protein belongs to the TRAFAC class myosin-kinesin ATPase superfamily. Kinesin family. KIN-13 subfamily.

Its function is as follows. Acts redundantly with KIN13A to modulate cell wall synthesis and cell expansion via the THE1 pathway. The chain is Kinesin-like protein KIN-13B from Arabidopsis thaliana (Mouse-ear cress).